The following is a 150-amino-acid chain: UPF0178 protein PSEEN5341 (150 aa).

This sequence belongs to the UPF0178 family.

This Pseudomonas entomophila (strain L48) protein is UPF0178 protein PSEEN5341.